The primary structure comprises 527 residues: Berberine bridge enzyme-like 14 (527 aa).

The N-terminal stretch at 1–23 (MKSSTTQTLIFTVFLLLIPTSFA) is a signal peptide. Cys-35 and Cys-96 are joined by a disulfide. N-linked (GlcNAc...) asparagine glycosylation is found at Asn-47, Asn-72, Asn-161, Asn-296, Asn-328, Asn-396, and Asn-481. The FAD-binding PCMH-type domain occupies 74–249 (TTRKPVAIVA…LAWKIKLVPV (176 aa)). The 6-(S-cysteinyl)-8alpha-(pros-histidyl)-FAD (His-Cys) cross-link spans 111–174 (HDYDGMSYLS…NLRGFPAGIC (64 aa)).

Belongs to the oxygen-dependent FAD-linked oxidoreductase family. The cofactor is FAD. In terms of processing, the FAD cofactor is bound via a bicovalent 6-S-cysteinyl, 8alpha-N1-histidyl FAD linkage.

The protein resides in the secreted. The protein localises to the cell wall. This Arabidopsis thaliana (Mouse-ear cress) protein is Berberine bridge enzyme-like 14.